The following is a 175-amino-acid chain: Ferritin light chain (175 aa).

The Ferritin-like diiron domain maps to 7–156; sequence QNYSPEVEAA…DHLTNIRRLS (150 aa). The Fe cation site is built by E54, E57, E58, E61, and E64.

Belongs to the ferritin family. Oligomer of 24 subunits. There are two types of subunits: L (light) chain and H (heavy) chain. The major chain can be light or heavy, depending on the species and tissue type. The functional molecule forms a roughly spherical shell with a diameter of 12 nm and contains a central cavity into which the insoluble mineral iron core is deposited. Interacts with NCOA4.

It is found in the cytoplasmic vesicle. The protein resides in the autophagosome. The protein localises to the cytoplasm. Its subcellular location is the autolysosome. In terms of biological role, stores iron in a soluble, non-toxic, readily available form. Important for iron homeostasis. Iron is taken up in the ferrous form and deposited as ferric hydroxides after oxidation. Also plays a role in delivery of iron to cells. Mediates iron uptake in capsule cells of the developing kidney. Delivery to lysosomes by the cargo receptor NCOA4 for autophagic degradation and release or iron. This chain is Ferritin light chain (FTL), found in Oryctolagus cuniculus (Rabbit).